The chain runs to 61 residues: Photosystem II reaction center protein K (61 aa).

The propeptide occupies 1-24 (MLNIFSLIWICLNSALYSSGFFFG). A helical membrane pass occupies residues 36 to 56 (IIDFMPVIPVFFFLLAFVWQA).

It belongs to the PsbK family. As to quaternary structure, PSII is composed of 1 copy each of membrane proteins PsbA, PsbB, PsbC, PsbD, PsbE, PsbF, PsbH, PsbI, PsbJ, PsbK, PsbL, PsbM, PsbT, PsbX, PsbY, PsbZ, Psb30/Ycf12, at least 3 peripheral proteins of the oxygen-evolving complex and a large number of cofactors. It forms dimeric complexes.

The protein resides in the plastid. The protein localises to the chloroplast thylakoid membrane. In terms of biological role, one of the components of the core complex of photosystem II (PSII). PSII is a light-driven water:plastoquinone oxidoreductase that uses light energy to abstract electrons from H(2)O, generating O(2) and a proton gradient subsequently used for ATP formation. It consists of a core antenna complex that captures photons, and an electron transfer chain that converts photonic excitation into a charge separation. The chain is Photosystem II reaction center protein K from Coffea arabica (Arabian coffee).